Here is a 397-residue protein sequence, read N- to C-terminus: Nickel-cobalt-cadmium resistance protein NccB (397 aa).

The chain crosses the membrane as a helical span at residues 10 to 30 (PSWPMIAGVAAAAALVGFGAA). Positions 137 to 195 (EAAAMAAERKVAQARADLARKTYERESSLFQQGVTPRQEMESARIALDVAQAEVQRAAT) form a coiled coil.

It belongs to the membrane fusion protein (MFP) (TC 8.A.1) family.

Its subcellular location is the cell inner membrane. Functionally, component of the NCC cation efflux system that confers resistance to nickel, cobalt and cadmium. This is Nickel-cobalt-cadmium resistance protein NccB (nccB) from Alcaligenes xylosoxydans xylosoxydans (Achromobacter xylosoxidans).